We begin with the raw amino-acid sequence, 145 residues long: Ribonuclease H (145 aa).

An RNase H type-1 domain is found at 1–141 (MQEVELFTDG…VDELANQAMD (141 aa)). Residues D9, E47, D69, and D133 each coordinate Mg(2+).

The protein belongs to the RNase H family. In terms of assembly, monomer. Requires Mg(2+) as cofactor.

It localises to the cytoplasm. It catalyses the reaction Endonucleolytic cleavage to 5'-phosphomonoester.. Functionally, endonuclease that specifically degrades the RNA of RNA-DNA hybrids. The chain is Ribonuclease H from Hydrogenovibrio crunogenus (strain DSM 25203 / XCL-2) (Thiomicrospira crunogena).